Consider the following 204-residue polypeptide: MKETRSKQPDITPDMLLRAYSIGLFPMADSADDPELFWVEPEIRGIIPLDRFHVSRSLAKAIRRRPFDIRFDTAFAEVMEGCAQPAPDRPTTWINDTIRSLYAALHNMGHAHSVEAWEGDALVGGLYGVSLGAAFFGESMFSRRTGASKICLVHLVERLRSKGFQLLDTQFTTEHLKSFGAVDVPKAQYEVLLAKAIASPNLEF.

It belongs to the L/F-transferase family.

It is found in the cytoplasm. The catalysed reaction is N-terminal L-lysyl-[protein] + L-leucyl-tRNA(Leu) = N-terminal L-leucyl-L-lysyl-[protein] + tRNA(Leu) + H(+). The enzyme catalyses N-terminal L-arginyl-[protein] + L-leucyl-tRNA(Leu) = N-terminal L-leucyl-L-arginyl-[protein] + tRNA(Leu) + H(+). It catalyses the reaction L-phenylalanyl-tRNA(Phe) + an N-terminal L-alpha-aminoacyl-[protein] = an N-terminal L-phenylalanyl-L-alpha-aminoacyl-[protein] + tRNA(Phe). Its function is as follows. Functions in the N-end rule pathway of protein degradation where it conjugates Leu, Phe and, less efficiently, Met from aminoacyl-tRNAs to the N-termini of proteins containing an N-terminal arginine or lysine. This is Leucyl/phenylalanyl-tRNA--protein transferase from Rhizobium meliloti (strain 1021) (Ensifer meliloti).